Here is a 499-residue protein sequence, read N- to C-terminus: 2-isopropylmalate synthase (499 aa).

One can recognise a Pyruvate carboxyltransferase domain in the interval 5–267 (IKIFDTTLRD…ETGINLGEIA (263 aa)). Mn(2+) contacts are provided by Asp14, His202, His204, and Asn238. Residues 391–499 (SVEVLHVISG…YLSALNRIRR (109 aa)) form a regulatory domain region.

Belongs to the alpha-IPM synthase/homocitrate synthase family. LeuA type 1 subfamily. It depends on Mn(2+) as a cofactor.

Its subcellular location is the cytoplasm. The catalysed reaction is 3-methyl-2-oxobutanoate + acetyl-CoA + H2O = (2S)-2-isopropylmalate + CoA + H(+). Its pathway is amino-acid biosynthesis; L-leucine biosynthesis; L-leucine from 3-methyl-2-oxobutanoate: step 1/4. Catalyzes the condensation of the acetyl group of acetyl-CoA with 3-methyl-2-oxobutanoate (2-ketoisovalerate) to form 3-carboxy-3-hydroxy-4-methylpentanoate (2-isopropylmalate). The polypeptide is 2-isopropylmalate synthase (Pyrococcus furiosus (strain ATCC 43587 / DSM 3638 / JCM 8422 / Vc1)).